The following is a 509-amino-acid chain: Autophagy-related protein 16 (509 aa).

7 WD repeats span residues 223–262 (AHEG…LIKS), 265–304 (GSLG…VRHT), 307–347 (GHTD…CTNT), 349–388 (LFTS…LLSE), 391–430 (GHSS…ICGT), 437–478 (RLAS…SILK), and 480–509 (QTSP…CTWT).

Belongs to the WD repeat ATG16 family.

Its function is as follows. May play a role in autophagy. This is Autophagy-related protein 16 from Arabidopsis thaliana (Mouse-ear cress).